The following is a 61-amino-acid chain: UPF0434 protein PSEEN1604 (61 aa).

It belongs to the UPF0434 family.

The polypeptide is UPF0434 protein PSEEN1604 (Pseudomonas entomophila (strain L48)).